Consider the following 869-residue polypeptide: Programmed cell death 6-interacting protein (869 aa).

At A2 the chain carries N-acetylalanine. A BRO1 domain is found at 3–392; sequence SFIWVQLKKT…AQMREATTLA (390 aa). The interval 176 to 503 is interaction with CHMP4A, CHMP4B and CHMP4C; sequence TVDISPDTVG…KFRAVLDKAV (328 aa). K215 carries the post-translational modification N6-acetyllysine. The segment at 383 to 869 is interaction with SDCBP; sequence AQMREATTLA…PPQQSYYPQQ (487 aa). T479 carries the phosphothreonine modification. S481 is subject to Phosphoserine. Residues 503 to 869 are self-association; that stretch reads VQADGQVKER…PPQQSYYPQQ (367 aa). 2 disordered regions span residues 715–808 and 838–869; these read REPS…PTYP and YHQS…YPQQ. The tract at residues 717–720 is interaction with TSG101; that stretch reads PSAP. S730 is subject to Phosphoserine. Residues 739–763 are compositionally biased toward pro residues; it reads PPTPAPRTMPPAKPQPPARPPPPVL. Phosphothreonine is present on T741. Omega-N-methylarginine is present on R745. The span at 764 to 787 shows a compositional bias: low complexity; the sequence is PANRVPPASAAAAPAGVGTASAAP. 2 stretches are compositionally biased toward pro residues: residues 788-808 and 845-861; these read PQTP…PTYP and APYP…PQPP. The tract at residues 798 to 807 is interaction with CEP55; sequence QAQGPPYPTY.

As to quaternary structure, self-associates. Interacts with SH3KBP1. Interacts with PDCD6 in a calcium-dependent manner. Interacts with TSG101 in a calcium-dependent manner; PDCD6IP homooligomerization may be required for TSG101-binding. Interacts with SGSM3. Directly interacts with CHMP4A, CHMP4B and CHMP4C. Directly interacts with CEP55 in a 1:2 stoechiometry; this interaction is required for PDCD6IP targeting to the midbody. May interact with PDGFRB. Interacts with SH3GL1 and SH3GL2/endophilin-1. Forms a complex with SDCBP and SDC2. Found in a complex with F-actin, TJP1/ZO-1 and PARD3. Interacts with CD2AP. Interacts with ARRDC1. Interacts (via BRO1 domain) with the ATG12-ATG3 conjugat; this interaction is bridged by ATG12 and promotes multiple PDCD6IP-mediated functions such as endolysosomal trafficking, macroautophagy and exosome biogenesis. May be phosphorylated on tyrosine residues by activated PDGFRB. As to expression, ubiquitously expressed. High expression in choroid plexus and low expression in cerebral cortex (at protein level).

Its subcellular location is the cytoplasm. It localises to the cytosol. The protein localises to the melanosome. The protein resides in the cytoskeleton. It is found in the microtubule organizing center. Its subcellular location is the centrosome. It localises to the secreted. The protein localises to the extracellular exosome. The protein resides in the cell junction. It is found in the tight junction. Its subcellular location is the midbody. It localises to the midbody ring. In terms of biological role, multifunctional protein involved in endocytosis, multivesicular body biogenesis, membrane repair, cytokinesis, apoptosis and maintenance of tight junction integrity. Class E VPS protein involved in concentration and sorting of cargo proteins of the multivesicular body (MVB) for incorporation into intralumenal vesicles (ILVs) that are generated by invagination and scission from the limiting membrane of the endosome. Binds to the phospholipid lysobisphosphatidic acid (LBPA) which is abundant in MVBs internal membranes. The MVB pathway requires the sequential function of ESCRT-O, -I,-II and -III complexes. The ESCRT machinery also functions in topologically equivalent membrane fission events, such as the terminal stages of cytokinesis. Adapter for a subset of ESCRT-III proteins, such as CHMP4, to function at distinct membranes. Required for completion of cytokinesis. May play a role in the regulation of both apoptosis and cell proliferation. Regulates exosome biogenesis in concert with SDC1/4 and SDCBP. By interacting with F-actin, PARD3 and TJP1 secures the proper assembly and positioning of actomyosin-tight junction complex at the apical sides of adjacent epithelial cells that defines a spatial membrane domain essential for the maintenance of epithelial cell polarity and barrier. The sequence is that of Programmed cell death 6-interacting protein from Mus musculus (Mouse).